A 295-amino-acid chain; its full sequence is Hydroxylase/desaturase efuI (295 aa).

It belongs to the asaB hydroxylase/desaturase family.

It functions in the pathway secondary metabolite biosynthesis; terpenoid biosynthesis. Its function is as follows. Hydroxylase/desaturase; part of the gene cluster that mediates the biosynthesis of enfumafungin, a glycosylated fernene-type triterpenoid with potent antifungal activity, mediated by its interaction with beta-1,3-glucan synthase and the fungal cell wall. The pathway begins with the terpene cyclase-glycosyl transferase fusion protein that most likely uses 2,3-oxidosqualene as substrate and catalyzes glycosylation immediately after cyclization. The fernene glycoside then could be processed by the desaturase efuI which catalyzes isomerization of a double bond established by efuA to form the core structure. The latter would then undergo a series of hydroxylations in unknown order at C-2, C-19, C-23 and C-25, which would be catalyzed by two of the three cytochrome P450 monooxygenases efuB, efuG or efuH. The hydroxy-group at C-25 becomes oxidized by the dehydrogenase efuE to enable a spontaneous, non-enzymatic hemiacetal formation with C-23. After hydroxylation at C-2, acetylation by the acetyltransferase efuC takes place. The final steps in enfumafungin biosynthesis require expansion of the 5-membered ring by lactonization via a Baeyer-Villiger reaction mediated by one of the BGC's cytochrome P450 monooxygenases (efuB, efuG or efuH) followed by ring cleavage. This type of reaction would establish a double bond between C-20 and C-21 which could be reduced by the reductase efuL to form the final product. The sequence is that of Hydroxylase/desaturase efuI from Hormonema carpetanum.